Reading from the N-terminus, the 291-residue chain is Probable protein S-acyltransferase 12 (291 aa).

2 helical membrane passes run 14–34 (GYFMILLVVAVVGVSYYAVVV) and 49–69 (LSALAALIIFVFHFLLIMLLW). The 51-residue stretch at 111–161 (GYCTKCRNVKPPRCHHCSVCQRCVLKMDHHCVWIVNCVGARNYKFFLLFLF) folds into the DHHC domain. Residue Cys141 is the S-palmitoyl cysteine intermediate of the active site. The next 2 membrane-spanning stretches (helical) occupy residues 155-175 (FFLLFLFYTFLETMLDVIVLL) and 198-218 (LVLAFVLNFAFVLSLLCFVVM).

It belongs to the DHHC palmitoyltransferase family.

It is found in the cell membrane. It carries out the reaction L-cysteinyl-[protein] + hexadecanoyl-CoA = S-hexadecanoyl-L-cysteinyl-[protein] + CoA. In terms of biological role, palmitoyl acyltransferase. The protein is Probable protein S-acyltransferase 12 (PAT12) of Arabidopsis thaliana (Mouse-ear cress).